The following is a 144-amino-acid chain: Austinoid biosynthesis cluster protein S (144 aa).

The protein belongs to the trt14 isomerase family. As to quaternary structure, homodimer.

It participates in secondary metabolite biosynthesis; terpenoid biosynthesis. In terms of biological role, part of the gene cluster that mediates the biosynthesis of calidodehydroaustin, a fungal meroterpenoid. The first step of the pathway is the synthesis of 3,5-dimethylorsellinic acid by the polyketide synthase ausA. 3,5-dimethylorsellinic acid is then prenylated by the polyprenyl transferase ausN. Further epoxidation by the FAD-dependent monooxygenase ausM and cyclization by the probable terpene cyclase ausL lead to the formation of protoaustinoid A. Protoaustinoid A is then oxidized to spiro-lactone preaustinoid A3 by the combined action of the FAD-binding monooxygenases ausB and ausC, and the dioxygenase ausE. Acid-catalyzed keto-rearrangement and ring contraction of the tetraketide portion of preaustinoid A3 by ausJ lead to the formation of preaustinoid A4. The aldo-keto reductase ausK, with the help of ausH, is involved in the next step by transforming preaustinoid A4 into isoaustinone which is in turn hydroxylated by the P450 monooxygenase ausI to form austinolide. The cytochrome P450 monooxygenase ausG modifies austinolide to austinol. Austinol is further acetylated to austin by the O-acetyltransferase ausP, which spontaneously changes to dehydroaustin. The cytochrome P450 monooxygenase ausR then converts dehydroaustin is into 7-dehydrodehydroaustin. The hydroxylation catalyzed by ausR permits the O-acetyltransferase ausQ to add an additional acetyl group to the molecule, leading to the formation of acetoxydehydroaustin. The short chain dehydrogenase ausT catalyzes the reduction of the double bond present between carbon atoms 1 and 2 to convert 7-dehydrodehydroaustin into 1,2-dihydro-7-hydroxydehydroaustin. AusQ catalyzes not only an acetylation reaction but also the addition of the PKS ausV diketide product to 1,2-dihydro-7-hydroxydehydroaustin, forming precalidodehydroaustin. Finally, the iron/alpha-ketoglutarate-dependent dioxygenase converts precalidodehydroaustin into calidodehydroaustin. AusS is necessary for austinoids production and may play a possible function as a regulator. Its function is as follows. May play a possible function as a regulator. In Aspergillus calidoustus, this protein is Austinoid biosynthesis cluster protein S.